Reading from the N-terminus, the 663-residue chain is UvrABC system protein B (663 aa).

Residues 30-417 enclose the Helicase ATP-binding domain; it reads EGIKAGKRHQ…TDKMVEQIIR (388 aa). 43-50 contributes to the ATP binding site; the sequence is GATGTGKT. The Beta-hairpin motif lies at 96 to 119; sequence YYDYYQPEAYVPSTDTFIEKDASI. One can recognise a Helicase C-terminal domain in the interval 434 to 600; sequence QIDDLLSEIQ…TINKKIHDLI (167 aa). The 36-residue stretch at 627–662 folds into the UVR domain; it reads QKTIDNIEKEMKQAAKDLDFEKATELRDMLFELKAE.

It belongs to the UvrB family. In terms of assembly, forms a heterotetramer with UvrA during the search for lesions. Interacts with UvrC in an incision complex.

The protein localises to the cytoplasm. The UvrABC repair system catalyzes the recognition and processing of DNA lesions. A damage recognition complex composed of 2 UvrA and 2 UvrB subunits scans DNA for abnormalities. Upon binding of the UvrA(2)B(2) complex to a putative damaged site, the DNA wraps around one UvrB monomer. DNA wrap is dependent on ATP binding by UvrB and probably causes local melting of the DNA helix, facilitating insertion of UvrB beta-hairpin between the DNA strands. Then UvrB probes one DNA strand for the presence of a lesion. If a lesion is found the UvrA subunits dissociate and the UvrB-DNA preincision complex is formed. This complex is subsequently bound by UvrC and the second UvrB is released. If no lesion is found, the DNA wraps around the other UvrB subunit that will check the other stand for damage. The polypeptide is UvrABC system protein B (Staphylococcus aureus (strain COL)).